We begin with the raw amino-acid sequence, 1247 residues long: Lon protease homolog 2, peroxisomal (1247 aa).

Residues 22 to 402 form the Lon N-terminal domain; it reads LPTYTLDSNL…LINEMILQLI (381 aa). Disordered stretches follow at residues 76–103, 447–503, and 626–655; these read SGNSNEEERSETEQKIEQSSLGQPETYH, TKNR…DVDD, and DQSDKSQPIKDNSKDSPNSSSKALTKSPTS. Low complexity predominate over residues 459 to 477; sequence PGPASSSGPSFSNGKSSPG. The segment covering 626 to 639 has biased composition (basic and acidic residues); that stretch reads DQSDKSQPIKDNSK. 721 to 728 contacts ATP; that stretch reads GPPGTGKT. A Lon proteolytic domain is found at 989–1230; that stretch reads TVGVGVVHGL…YDIIKIVWNE (242 aa). Active-site residues include serine 1099 and lysine 1142.

This sequence belongs to the peptidase S16 family.

It localises to the peroxisome matrix. The catalysed reaction is Hydrolysis of proteins in presence of ATP.. ATP-dependent serine protease that mediates the selective degradation of misfolded and unassembled polypeptides in the peroxisomal matrix. Necessary for type 2 peroxisome targeting signal (PTS2)-containing protein processing and facilitates peroxisome matrix protein import. The polypeptide is Lon protease homolog 2, peroxisomal (Candida dubliniensis (strain CD36 / ATCC MYA-646 / CBS 7987 / NCPF 3949 / NRRL Y-17841) (Yeast)).